Here is a 228-residue protein sequence, read N- to C-terminus: Transcription factor zip-11 (228 aa).

Residues 166–202 (RKRQQNKVAAARYRDKQKAKWQDLLDQLEAEEDRNQR) form a basic motif region. In terms of domain architecture, bZIP spans 166–224 (RKRQQNKVAAARYRDKQKAKWQDLLDQLEAEEDRNQRLKLQAGHLEKEVAEMRQAFLAK). The interval 203-210 (LKLQAGHL) is leucine-zipper.

This sequence belongs to the bZIP family. Interacts with CCAAT/enhancer-binding protein cebp-2.

The protein resides in the nucleus. Functionally, transcription factor. Involved in modulating innate immune response pathways, acting to promote resistance against infection by Gram-negative bacterium P.aeruginosa strain PA14. May act as part of a feedback regulatory loop with the pmk-1/p38 MAPK pathway. May also function in concert with CCAAT/enhancer-binding protein cebp-2 to mediate immune responses, independently of the pmk-1/p38 MAPK pathway. The sequence is that of Transcription factor zip-11 from Caenorhabditis elegans.